The following is a 122-amino-acid chain: Large ribosomal subunit protein uL14 (122 aa).

It belongs to the universal ribosomal protein uL14 family. Part of the 50S ribosomal subunit. Forms a cluster with proteins L3 and L19. In the 70S ribosome, L14 and L19 interact and together make contacts with the 16S rRNA in bridges B5 and B8.

Functionally, binds to 23S rRNA. Forms part of two intersubunit bridges in the 70S ribosome. This chain is Large ribosomal subunit protein uL14, found in Halorhodospira halophila (strain DSM 244 / SL1) (Ectothiorhodospira halophila (strain DSM 244 / SL1)).